Consider the following 276-residue polypeptide: Undecaprenyl-diphosphatase 1 (276 aa).

6 helical membrane passes run 44–63 (ALAF…IWEY), 85–105 (VNLL…ADLI), 109–129 (LFNP…MLWA), 183–203 (AATE…AVYS), 214–234 (GDFA…MLAV), and 249–269 (FAWY…LGMI).

Belongs to the UppP family.

Its subcellular location is the cell inner membrane. The catalysed reaction is di-trans,octa-cis-undecaprenyl diphosphate + H2O = di-trans,octa-cis-undecaprenyl phosphate + phosphate + H(+). Its function is as follows. Catalyzes the dephosphorylation of undecaprenyl diphosphate (UPP). Confers resistance to bacitracin. This is Undecaprenyl-diphosphatase 1 from Stutzerimonas stutzeri (strain A1501) (Pseudomonas stutzeri).